A 921-amino-acid polypeptide reads, in one-letter code: Protein translocase subunit SecA (921 aa).

Residues Q87, 105–109 (GEGKT), and D515 each bind ATP. The tract at residues 575 to 594 (RRIDNQLRGRSGRQGDPGSS) is disordered. Zn(2+) contacts are provided by C905, C907, C916, and C917.

It belongs to the SecA family. As to quaternary structure, monomer and homodimer. Part of the essential Sec protein translocation apparatus which comprises SecA, SecYEG and auxiliary proteins SecDF-YajC and YidC. Zn(2+) is required as a cofactor.

The protein resides in the cell inner membrane. The protein localises to the cytoplasm. The catalysed reaction is ATP + H2O + cellular proteinSide 1 = ADP + phosphate + cellular proteinSide 2.. Functionally, part of the Sec protein translocase complex. Interacts with the SecYEG preprotein conducting channel. Has a central role in coupling the hydrolysis of ATP to the transfer of proteins into and across the cell membrane, serving both as a receptor for the preprotein-SecB complex and as an ATP-driven molecular motor driving the stepwise translocation of polypeptide chains across the membrane. This chain is Protein translocase subunit SecA, found in Polynucleobacter necessarius subsp. necessarius (strain STIR1).